The primary structure comprises 547 residues: Glucose-6-phosphate isomerase (547 aa).

Glu-351 acts as the Proton donor in catalysis. Catalysis depends on residues His-382 and Lys-511.

Belongs to the GPI family.

Its subcellular location is the cytoplasm. The catalysed reaction is alpha-D-glucose 6-phosphate = beta-D-fructose 6-phosphate. It participates in carbohydrate biosynthesis; gluconeogenesis. It functions in the pathway carbohydrate degradation; glycolysis; D-glyceraldehyde 3-phosphate and glycerone phosphate from D-glucose: step 2/4. In terms of biological role, catalyzes the reversible isomerization of glucose-6-phosphate to fructose-6-phosphate. In Xanthobacter autotrophicus (strain ATCC BAA-1158 / Py2), this protein is Glucose-6-phosphate isomerase.